Here is a 226-residue protein sequence, read N- to C-terminus: Thiamine-phosphate synthase (226 aa).

4-amino-2-methyl-5-(diphosphooxymethyl)pyrimidine-binding positions include 46 to 50 (QLRDK) and asparagine 87. Mg(2+)-binding residues include aspartate 88 and aspartate 107. A 4-amino-2-methyl-5-(diphosphooxymethyl)pyrimidine-binding site is contributed by serine 126. 152 to 154 (TPT) contacts 2-[(2R,5Z)-2-carboxy-4-methylthiazol-5(2H)-ylidene]ethyl phosphate. Lysine 155 is a binding site for 4-amino-2-methyl-5-(diphosphooxymethyl)pyrimidine. A 2-[(2R,5Z)-2-carboxy-4-methylthiazol-5(2H)-ylidene]ethyl phosphate-binding site is contributed by glycine 183.

This sequence belongs to the thiamine-phosphate synthase family. Mg(2+) serves as cofactor.

The catalysed reaction is 2-[(2R,5Z)-2-carboxy-4-methylthiazol-5(2H)-ylidene]ethyl phosphate + 4-amino-2-methyl-5-(diphosphooxymethyl)pyrimidine + 2 H(+) = thiamine phosphate + CO2 + diphosphate. It carries out the reaction 2-(2-carboxy-4-methylthiazol-5-yl)ethyl phosphate + 4-amino-2-methyl-5-(diphosphooxymethyl)pyrimidine + 2 H(+) = thiamine phosphate + CO2 + diphosphate. It catalyses the reaction 4-methyl-5-(2-phosphooxyethyl)-thiazole + 4-amino-2-methyl-5-(diphosphooxymethyl)pyrimidine + H(+) = thiamine phosphate + diphosphate. It participates in cofactor biosynthesis; thiamine diphosphate biosynthesis; thiamine phosphate from 4-amino-2-methyl-5-diphosphomethylpyrimidine and 4-methyl-5-(2-phosphoethyl)-thiazole: step 1/1. Condenses 4-methyl-5-(beta-hydroxyethyl)thiazole monophosphate (THZ-P) and 2-methyl-4-amino-5-hydroxymethyl pyrimidine pyrophosphate (HMP-PP) to form thiamine monophosphate (TMP). This chain is Thiamine-phosphate synthase, found in Mycobacterium sp. (strain KMS).